We begin with the raw amino-acid sequence, 151 residues long: Ribonuclease H (151 aa).

The region spanning 1-143 is the RNase H type-1 domain; that stretch reads MYKKIEIFTD…CDQLARLAAK (143 aa). Mg(2+)-binding residues include Asp-10, Glu-48, Asp-70, and Asp-135.

The protein belongs to the RNase H family. Monomer. The cofactor is Mg(2+).

Its subcellular location is the cytoplasm. It carries out the reaction Endonucleolytic cleavage to 5'-phosphomonoester.. Its function is as follows. Endonuclease that specifically degrades the RNA of RNA-DNA hybrids. The sequence is that of Ribonuclease H from Blochmanniella pennsylvanica (strain BPEN).